A 68-amino-acid chain; its full sequence is Large ribosomal subunit protein uL29 (68 aa).

Belongs to the universal ribosomal protein uL29 family.

This Roseobacter denitrificans (strain ATCC 33942 / OCh 114) (Erythrobacter sp. (strain OCh 114)) protein is Large ribosomal subunit protein uL29.